Here is a 185-residue protein sequence, read N- to C-terminus: ATP synthase subunit b 2 (185 aa).

Positions 1–24 (MADSHGNAKGATAHTEAGGGHKAP) are disordered. The chain crosses the membrane as a helical span at residues 34-56 (ASQLVSLTIAFVALYLISSRLAL).

Belongs to the ATPase B chain family. In terms of assembly, F-type ATPases have 2 components, F(1) - the catalytic core - and F(0) - the membrane proton channel. F(1) has five subunits: alpha(3), beta(3), gamma(1), delta(1), epsilon(1). F(0) has three main subunits: a(1), b(2) and c(10-14). The alpha and beta chains form an alternating ring which encloses part of the gamma chain. F(1) is attached to F(0) by a central stalk formed by the gamma and epsilon chains, while a peripheral stalk is formed by the delta and b chains.

The protein resides in the cell inner membrane. In terms of biological role, f(1)F(0) ATP synthase produces ATP from ADP in the presence of a proton or sodium gradient. F-type ATPases consist of two structural domains, F(1) containing the extramembraneous catalytic core and F(0) containing the membrane proton channel, linked together by a central stalk and a peripheral stalk. During catalysis, ATP synthesis in the catalytic domain of F(1) is coupled via a rotary mechanism of the central stalk subunits to proton translocation. Its function is as follows. Component of the F(0) channel, it forms part of the peripheral stalk, linking F(1) to F(0). The b'-subunit is a diverged and duplicated form of b found in plants and photosynthetic bacteria. In Nitrobacter hamburgensis (strain DSM 10229 / NCIMB 13809 / X14), this protein is ATP synthase subunit b 2 (atpF2).